A 228-amino-acid polypeptide reads, in one-letter code: Ion-translocating oxidoreductase complex subunit G (228 aa).

Residues 35–55 form a helical membrane-spanning segment; sequence ALSLGLVCALVAVALLLGNQL. Thr197 is subject to FMN phosphoryl threonine.

It belongs to the RnfG family. In terms of assembly, the complex is composed of six subunits: RnfA, RnfB, RnfC, RnfD, RnfE and RnfG. FMN serves as cofactor.

The protein localises to the cell inner membrane. Its function is as follows. Part of a membrane-bound complex that couples electron transfer with translocation of ions across the membrane. The sequence is that of Ion-translocating oxidoreductase complex subunit G from Stutzerimonas stutzeri (Pseudomonas stutzeri).